Consider the following 246-residue polypeptide: NLP effector protein 2 (246 aa).

The signal sequence occupies residues 1–19; sequence MKFVVFLCAIAAVVATIQG. A Conserved undecapeptide motif I motif is present at residues 113 to 123; sequence AIMYSWYFPKD. The short motif at 130-136 is the Hepta-peptide GHRHDWE motif II element; it reads GHRHDWE.

The protein belongs to the Necrosis inducing protein (NPP1) family.

It localises to the secreted. Functionally, secreted effector that contributes strongly to virulence during infection by P.capsici. Causes large necrotic areas in both host C.annuum and non-host N.benthamiana. The sequence is that of NLP effector protein 2 from Phytophthora capsici.